The following is a 240-amino-acid chain: UDP-2,3-diacylglucosamine hydrolase (240 aa).

Mn(2+) is bound by residues Asp8, His10, Asp41, Asn79, and His114. Position 79–80 (79–80) interacts with substrate; it reads NR. Substrate-binding residues include Asp122, Ser160, Asn164, Lys167, and His195. Mn(2+) contacts are provided by His195 and His197.

This sequence belongs to the LpxH family. Mn(2+) serves as cofactor.

It is found in the cell inner membrane. It carries out the reaction UDP-2-N,3-O-bis[(3R)-3-hydroxytetradecanoyl]-alpha-D-glucosamine + H2O = 2-N,3-O-bis[(3R)-3-hydroxytetradecanoyl]-alpha-D-glucosaminyl 1-phosphate + UMP + 2 H(+). The protein operates within glycolipid biosynthesis; lipid IV(A) biosynthesis; lipid IV(A) from (3R)-3-hydroxytetradecanoyl-[acyl-carrier-protein] and UDP-N-acetyl-alpha-D-glucosamine: step 4/6. Its function is as follows. Hydrolyzes the pyrophosphate bond of UDP-2,3-diacylglucosamine to yield 2,3-diacylglucosamine 1-phosphate (lipid X) and UMP by catalyzing the attack of water at the alpha-P atom. Involved in the biosynthesis of lipid A, a phosphorylated glycolipid that anchors the lipopolysaccharide to the outer membrane of the cell. The polypeptide is UDP-2,3-diacylglucosamine hydrolase (Salmonella paratyphi C (strain RKS4594)).